Here is a 673-residue protein sequence, read N- to C-terminus: F420-dependent formate dehydrogenase subunit alpha (673 aa).

The region spanning 3-59 (FKIVNTICPYCGVGCGLGLVVKDGRVIGIHPNKRHPINEGKLCAKGNYCYQFIHSKD) is the 4Fe-4S Mo/W bis-MGD-type domain. 4 residues coordinate [4Fe-4S] cluster: Cys-10, Cys-13, Cys-17, and Cys-45. Position 131 (Sec-131) is a non-standard amino acid, selenocysteine.

Belongs to the prokaryotic molybdopterin-containing oxidoreductase family. Dimer of an alpha (FdhA) and a beta (FdhB) subunit. It depends on [4Fe-4S] cluster as a cofactor. Requires Mo-bis(molybdopterin guanine dinucleotide) as cofactor. Zn(2+) is required as a cofactor.

It carries out the reaction oxidized coenzyme F420-(gamma-L-Glu)(n) + formate + 2 H(+) = reduced coenzyme F420-(gamma-L-Glu)(n) + CO2. In terms of biological role, catalyzes the oxidation of formate to carbon dioxide, with coenzyme F420 as the electron acceptor. The protein is F420-dependent formate dehydrogenase subunit alpha (fdhA) of Methanocaldococcus jannaschii (strain ATCC 43067 / DSM 2661 / JAL-1 / JCM 10045 / NBRC 100440) (Methanococcus jannaschii).